Reading from the N-terminus, the 548-residue chain is MISKINGKLFADMIIQGAQNLSNNADLVDSLNVYPVPDGDTGTNMNLTMTSGREEVENNLSKNIGELGKTFSKGLLMGARGNSGVILSQLFRGFCKNIESESEINSKLLAESFQAGVETAYKAVMKPVEGTILTVAKDAAQAAVEKANNTEDCIELMEYIIVKANESLENTPNLLAVLKEVGVVDSGGKGLLCVYEGFLKALKGEKVEAKVAKLDKDEFVHDEHDFHGVINTEDIIYGYCTEMMVRFGKNKKAFDEQEFRQDMSQFGDSLLVINDEEIVKVHVHTEYPGKVFNYGQQYGELIKLKVENMREQHREVIRKEQHTAKPKMETVETAIITISMGEGISEIFKSMGATHIISGGQTMNPSTEDIVKVIEQSKCKRAIILPNNKNILMASEQAASIVDAEAVVIPTKSIPQGISALFQYDVDATLEENKAQMADSVNNVKSGSLTYAVRDTKIDGVEIKKDAFMGLIEDKIVSSKSDQLTTVTELLNEMLAEDSEILTVIIGQDAEQAVTDNMINWIEEQNPDVEVEVHEGGQPIYQYFFSVE.

One can recognise a DhaL domain in the interval 8-200 (KLFADMIIQG…LLCVYEGFLK (193 aa)).

This is an uncharacterized protein from Staphylococcus aureus (strain bovine RF122 / ET3-1).